We begin with the raw amino-acid sequence, 374 residues long: Histidinol-phosphate aminotransferase 2 (374 aa).

Lys-227 carries the N6-(pyridoxal phosphate)lysine modification.

The protein belongs to the class-II pyridoxal-phosphate-dependent aminotransferase family. Histidinol-phosphate aminotransferase subfamily. In terms of assembly, homodimer. Pyridoxal 5'-phosphate serves as cofactor.

The enzyme catalyses L-histidinol phosphate + 2-oxoglutarate = 3-(imidazol-4-yl)-2-oxopropyl phosphate + L-glutamate. It functions in the pathway amino-acid biosynthesis; L-histidine biosynthesis; L-histidine from 5-phospho-alpha-D-ribose 1-diphosphate: step 7/9. The protein is Histidinol-phosphate aminotransferase 2 (hisC2) of Ralstonia nicotianae (strain ATCC BAA-1114 / GMI1000) (Ralstonia solanacearum).